The sequence spans 358 residues: MTHQIAVLPGDGIGPEIVEQAERVLKALDLPLELRQAPVGGAAFDQFEHPLPPATLELAQGSHAVLFGAVGDWKYDTLPREFRPEQAILGLRKALGLFANLRPAILYPELASASSLKPEIVSGLDILIIRELTGDIYFGTPRGVRTAADGAFAGEREGYDTMRYAESEVRRIARIGFESARKRNKKLCSVDKANVLETSQFWRDLVIEVSRDYLDVELSHMYVDNAAMQLVRNPRQFDVIVTGNLFGDILSDEAAMLTGSIGMLPSASLNAAGQGLYEPSHGSAPDIAGQGIANPLATILSAAMLLRYSLNLAPQADRVEAAVRKVLADGLRTADIHEAGTTKVSTSQMGDAVLKALG.

Positions 92, 102, 130, and 224 each coordinate substrate. Mg(2+)-binding residues include D224, D248, and D252. 282–294 provides a ligand contact to NAD(+); the sequence is GSAPDIAGQGIAN.

The protein belongs to the isocitrate and isopropylmalate dehydrogenases family. LeuB type 1 subfamily. In terms of assembly, homodimer. It depends on Mg(2+) as a cofactor. Requires Mn(2+) as cofactor.

Its subcellular location is the cytoplasm. It carries out the reaction (2R,3S)-3-isopropylmalate + NAD(+) = 4-methyl-2-oxopentanoate + CO2 + NADH. Its pathway is amino-acid biosynthesis; L-leucine biosynthesis; L-leucine from 3-methyl-2-oxobutanoate: step 3/4. In terms of biological role, catalyzes the oxidation of 3-carboxy-2-hydroxy-4-methylpentanoate (3-isopropylmalate) to 3-carboxy-4-methyl-2-oxopentanoate. The product decarboxylates to 4-methyl-2 oxopentanoate. This Bordetella pertussis (strain Tohama I / ATCC BAA-589 / NCTC 13251) protein is 3-isopropylmalate dehydrogenase.